Consider the following 230-residue polypeptide: Heptaprenylglyceryl phosphate synthase (230 aa).

Residue Lys12 coordinates sn-glycerol 1-phosphate. Residues Asp14 and Thr40 each contribute to the Mg(2+) site. Sn-glycerol 1-phosphate contacts are provided by residues 159-164, Gly189, and 209-210; these read YIEYSG and GD.

This sequence belongs to the GGGP/HepGP synthase family. Group I subfamily. In terms of assembly, homodimer. The cofactor is Mg(2+).

The catalysed reaction is sn-glycerol 1-phosphate + all-trans-heptaprenyl diphosphate = 3-heptaprenyl-sn-glycero-1-phosphate + diphosphate. It functions in the pathway membrane lipid metabolism; glycerophospholipid metabolism. Functionally, prenyltransferase that catalyzes in vivo the transfer of the heptaprenyl moiety of heptaprenyl pyrophosphate (HepPP; 35 carbon atoms) to the C3 hydroxyl of sn-glycerol-1-phosphate (G1P), producing heptaprenylglyceryl phosphate (HepGP). This reaction is an ether-bond-formation step in the biosynthesis of archaea-type G1P-based membrane lipids found in Bacillales. The protein is Heptaprenylglyceryl phosphate synthase of Staphylococcus aureus (strain JH1).